The sequence spans 203 residues: Small ribosomal subunit protein uS4 (203 aa).

Residues 93–156 (RRLDNVVYRL…MKVPAILEAV (64 aa)) enclose the S4 RNA-binding domain.

The protein belongs to the universal ribosomal protein uS4 family. As to quaternary structure, part of the 30S ribosomal subunit. Contacts protein S5. The interaction surface between S4 and S5 is involved in control of translational fidelity.

Its function is as follows. One of the primary rRNA binding proteins, it binds directly to 16S rRNA where it nucleates assembly of the body of the 30S subunit. Functionally, with S5 and S12 plays an important role in translational accuracy. The chain is Small ribosomal subunit protein uS4 from Streptococcus pyogenes serotype M4 (strain MGAS10750).